We begin with the raw amino-acid sequence, 873 residues long: Zinc fingers and homeoboxes protein 1 (873 aa).

The tract at residues 24–63 (LISDLDEGPPVLTPVENTRAESISSDEEVHESVDSDNQQN) is disordered. The residue at position 36 (threonine 36) is a Phosphothreonine. Serine 45, serine 47, and serine 48 each carry phosphoserine. 2 consecutive C2H2-type zinc fingers follow at residues 70–93 (YECK…DSEH) and 102–125 (YVCV…LKYH). A Glycyl lysine isopeptide (Lys-Gly) (interchain with G-Cter in SUMO2) cross-link involves residue lysine 159. Residues 200–236 (HNSVEDVPEEKENEIKPDREEIVENPSSSASESNTST) are disordered. Serine 202 bears the Phosphoserine mark. Residues 212 to 221 (NEIKPDREEI) show a composition bias toward basic and acidic residues. Residues 223-236 (ENPSSSASESNTST) are compositionally biased toward low complexity. The interval 272 to 432 (NSNLIPKVLI…QNNIQKSQVP (161 aa)) is required for dimerization. The segment at 272 to 564 (NSNLIPKVLI…AQPKQSWNPF (293 aa)) is required for interaction with NFYA. Residues 284 to 346 (NSIPTYNAAL…LKHGVSWTPE (63 aa)) constitute a DNA-binding region (homeobox 1). Residues lysine 441, lysine 454, lysine 485, and lysine 629 each participate in a glycyl lysine isopeptide (Lys-Gly) (interchain with G-Cter in SUMO2) cross-link. DNA-binding regions (homeobox) lie at residues 464–526 (SFGI…KSNQ) and 569–630 (PQKF…EEKM). Disordered regions lie at residues 626–667 (KEEK…ICKK) and 732–769 (SSMN…INNW). The residue at position 648 (serine 648) is a Phosphoserine. The homeobox 4 DNA-binding region spans 660-722 (STGKICKKTP…YAWKNGNLKW (63 aa)). A required for nuclear localization region spans residues 734 to 768 (MNGLSSLRKRGRGRPKGRGRGRPRGRPRGSKRINN). A compositionally biased stretch (basic residues) spans 740–764 (LRKRGRGRPKGRGRGRPRGRPRGSK). Serine 774 is modified (phosphoserine). The segment at residues 777 to 832 (KFKTGTAILKDYYLKHKFLNEQDLDELVNKSHMGYEQVREWFAERQRRSELGIELF) is a DNA-binding region (homeobox 5). Positions 829-873 (IELFEENEEEDEVIDDQEEDEEETDDSDTWEPPRHVKRKLSKSDD) are disordered. The segment covering 831–857 (LFEENEEEDEVIDDQEEDEEETDDSDT) has biased composition (acidic residues). Residues 831–873 (LFEENEEEDEVIDDQEEDEEETDDSDTWEPPRHVKRKLSKSDD) form a required for repressor activity region. Residues 863–873 (HVKRKLSKSDD) are compositionally biased toward basic residues.

It belongs to the ZHX family. As to quaternary structure, forms homodimers. Heterodimer (via HD1 domain) with ZHX2 (via HD1 domain). Also forms a heterodimer with ZHX3 which is a prerequisite for repressor activity. Interacts with ATF7IP and NFYA. Interacts (via homeobox domains) with DNMT3B (via PWWP domain).

The protein localises to the nucleus. In terms of biological role, acts as a transcriptional repressor. Increases DNMT3B-mediated repressive transcriptional activity when DNMT3B is tethered to DNA. May link molecule between DNMT3B and other co-repressor proteins. The protein is Zinc fingers and homeoboxes protein 1 (ZHX1) of Pan troglodytes (Chimpanzee).